The chain runs to 232 residues: Enolase-phosphatase E1 (232 aa).

The protein belongs to the HAD-like hydrolase superfamily. MasA/MtnC family. Monomer. The cofactor is Mg(2+).

The enzyme catalyses 5-methylsulfanyl-2,3-dioxopentyl phosphate + H2O = 1,2-dihydroxy-5-(methylsulfanyl)pent-1-en-3-one + phosphate. The protein operates within amino-acid biosynthesis; L-methionine biosynthesis via salvage pathway; L-methionine from S-methyl-5-thio-alpha-D-ribose 1-phosphate: step 3/6. It participates in amino-acid biosynthesis; L-methionine biosynthesis via salvage pathway; L-methionine from S-methyl-5-thio-alpha-D-ribose 1-phosphate: step 4/6. Functionally, bifunctional enzyme that catalyzes the enolization of 2,3-diketo-5-methylthiopentyl-1-phosphate (DK-MTP-1-P) into the intermediate 2-hydroxy-3-keto-5-methylthiopentenyl-1-phosphate (HK-MTPenyl-1-P), which is then dephosphorylated to form the acireductone 1,2-dihydroxy-3-keto-5-methylthiopentene (DHK-MTPene). This Xanthomonas campestris pv. campestris (strain B100) protein is Enolase-phosphatase E1.